The chain runs to 273 residues: Outer surface protein A (273 aa).

The first 16 residues, 1-16 (MKKYLLGIGLILALIA), serve as a signal peptide directing secretion. Residue Cys-17 is the site of N-palmitoyl cysteine attachment. Cys-17 carries the S-diacylglycerol cysteine lipid modification.

It belongs to the OspA lipoprotein family.

It is found in the cell outer membrane. It localises to the cell surface. The polypeptide is Outer surface protein A (Borreliella burgdorferi (strain N40) (Borrelia burgdorferi)).